Reading from the N-terminus, the 566-residue chain is Glucose-6-phosphate isomerase, cytosolic (566 aa).

Glutamate 360 functions as the Proton donor in the catalytic mechanism. Active-site residues include histidine 391 and lysine 516.

It belongs to the GPI family. As to quaternary structure, homodimer.

It is found in the cytoplasm. The catalysed reaction is alpha-D-glucose 6-phosphate = beta-D-fructose 6-phosphate. The protein operates within carbohydrate degradation; glycolysis; D-glyceraldehyde 3-phosphate and glycerone phosphate from D-glucose: step 2/4. This chain is Glucose-6-phosphate isomerase, cytosolic (PGIC), found in Spinacia oleracea (Spinach).